A 201-amino-acid chain; its full sequence is MSRYRGPRFKKIRRLGALPGLTSKRPRSGSDLRNQSRSGKRSQYRIRLEEKQKLRFHYGLTERQLLRYVRIAGKAKGSTGQVLLQLLEMRLDNILFRLGMASTIPGARQLVNHRHILVNGRLVDIPSYRCKPGDFVTTREKERSRALIQNHMNSSPNEELPKHLTLYSLQYKGLVNQIIDSKWIGLKINELLVVEYYSRQT.

Residues 15-43 (LGALPGLTSKRPRSGSDLRNQSRSGKRSQ) are disordered. An S4 RNA-binding domain is found at 89-150 (MRLDNILFRL…KERSRALIQN (62 aa)).

The protein belongs to the universal ribosomal protein uS4 family. As to quaternary structure, part of the 30S ribosomal subunit. Contacts protein S5. The interaction surface between S4 and S5 is involved in control of translational fidelity.

It is found in the plastid. The protein localises to the chloroplast. Functionally, one of the primary rRNA binding proteins, it binds directly to 16S rRNA where it nucleates assembly of the body of the 30S subunit. Its function is as follows. With S5 and S12 plays an important role in translational accuracy. In Amborella trichopoda, this protein is Small ribosomal subunit protein uS4c (rps4).